Here is a 108-residue protein sequence, read N- to C-terminus: Glutaredoxin-1 (108 aa).

Residues 3–106 (EEFVQQRLAN…DILSSIGVLR (104 aa)) enclose the Glutaredoxin domain. A disulfide bridge links Cys-23 with Cys-26.

The protein belongs to the glutaredoxin family.

It localises to the virion. Its function is as follows. Has thioltransferase and dehydroascorbate reductase activities. In Ectromelia virus (strain Moscow) (ECTV), this protein is Glutaredoxin-1 (OPG075).